A 155-amino-acid chain; its full sequence is Small ribosomal subunit protein uS7 (155 aa).

It belongs to the universal ribosomal protein uS7 family. In terms of assembly, part of the 30S ribosomal subunit. Contacts proteins S9 and S11.

Functionally, one of the primary rRNA binding proteins, it binds directly to 16S rRNA where it nucleates assembly of the head domain of the 30S subunit. Is located at the subunit interface close to the decoding center, probably blocks exit of the E-site tRNA. This Pelodictyon phaeoclathratiforme (strain DSM 5477 / BU-1) protein is Small ribosomal subunit protein uS7.